Here is a 486-residue protein sequence, read N- to C-terminus: 3-sulfolactaldehyde dehydrogenase (486 aa).

NADP(+)-binding positions include 157 to 158 (WN), 181 to 184 (RPAS), and 234 to 235 (GS). Glutamate 256 serves as the catalytic Proton acceptor. Leucine 257 contacts NADP(+). The Nucleophile role is filled by cysteine 290. NADP(+) is bound at residue glutamate 387.

The protein belongs to the aldehyde dehydrogenase family.

It carries out the reaction (2S)-3-sulfolactaldehyde + NADP(+) + H2O = (2S)-3-sulfolactate + NADPH + 2 H(+). The catalysed reaction is (2S)-3-sulfolactaldehyde + NAD(+) + H2O = (2S)-3-sulfolactate + NADH + 2 H(+). Catalyzes the oxidation of (2S)-3-sulfolactaldehyde to (2S)-3-sulfolactate, using both NAD(+) and NADP(+) as electron acceptors. Is involved in a degradation pathway of sulfoquinovose (SQ) that allows P.putida SQ1 to use SQ as the sole carbon and energy source for growth. This Pseudomonas putida (Arthrobacter siderocapsulatus) protein is 3-sulfolactaldehyde dehydrogenase.